We begin with the raw amino-acid sequence, 613 residues long: Glucose-6-phosphate isomerase 1, chloroplastic (613 aa).

Residues 1 to 14 (MASLSGLYSSSPSL) are compositionally biased toward low complexity. Residues 1 to 21 (MASLSGLYSSSPSLKPAKNHS) are disordered. A chloroplast-targeting transit peptide spans 1-48 (MASLSGLYSSSPSLKPAKNHSFKALPAQSRDSFSFPHTSKPTNLPLTL). The active-site Proton donor is the Glu392. Active-site residues include His421 and Lys526. Residue Ser595 is modified to Phosphoserine.

Belongs to the GPI family.

It is found in the plastid. Its subcellular location is the chloroplast stroma. The enzyme catalyses alpha-D-glucose 6-phosphate = beta-D-fructose 6-phosphate. It functions in the pathway carbohydrate degradation; glycolysis; D-glyceraldehyde 3-phosphate and glycerone phosphate from D-glucose: step 2/4. The protein operates within carbohydrate biosynthesis; gluconeogenesis. With respect to regulation, inhibited by glycerol-3-P (G3P). Its function is as follows. Promotes the synthesis of starch in leaves. The chain is Glucose-6-phosphate isomerase 1, chloroplastic (PGI1) from Arabidopsis thaliana (Mouse-ear cress).